We begin with the raw amino-acid sequence, 292 residues long: ATP synthase gamma chain (292 aa).

Belongs to the ATPase gamma chain family. In terms of assembly, F-type ATPases have 2 components, CF(1) - the catalytic core - and CF(0) - the membrane proton channel. CF(1) has five subunits: alpha(3), beta(3), gamma(1), delta(1), epsilon(1). CF(0) has three main subunits: a, b and c.

It is found in the cell inner membrane. Functionally, produces ATP from ADP in the presence of a proton gradient across the membrane. The gamma chain is believed to be important in regulating ATPase activity and the flow of protons through the CF(0) complex. The polypeptide is ATP synthase gamma chain (Brucella canis (strain ATCC 23365 / NCTC 10854 / RM-666)).